We begin with the raw amino-acid sequence, 485 residues long: MTTTLMIQGTTSDAGKTTLVAALCRILARKGIKVAPFKPQNMALNSAVTEDGGEIGRGQAVQAQAAGIAPHTDMNPILLKPSTDTGAQVIVHGKALSAMEADAYHDYKKVAMQAVLESYRRLQTQYQVIVVEGAGSPAEINLREGDIANMGFAEEVDCPVIIIADIDKGGVFAHLVGTLELLSASEQKRVVGFVINRFRGDIELLKPGLTWLEQKTNKPVLGVIPYIQKLHLEAEDALTANSTAENTQHLKIRVPVWQRISNHTDFDPLRLHPQVDFAFVGPGQSLEGADLIILPGTKNTIADLNFMRSQGWDTQLAKHLRYGGKVLGICGGLQMLGTALHDPHGIESPASSVNGLGYLDFETTFTQHKTLLNLQGELHINDKPVAISGYEIHAGLSTGPAFQRPIIYCEGQPEGCRSADDQIIATYWHGLFSQPSATQALLAWAGLTNARALDYSALIETELTRLADEVEQCMDIDALFPTFAS.

Residues 249–437 (HLKIRVPVWQ…WHGLFSQPSA (189 aa)) form the GATase cobBQ-type domain. Cysteine 330 functions as the Nucleophile in the catalytic mechanism. Residue histidine 429 is part of the active site.

This sequence belongs to the CobB/CobQ family. CobQ subfamily.

The protein operates within cofactor biosynthesis; adenosylcobalamin biosynthesis. In terms of biological role, catalyzes amidations at positions B, D, E, and G on adenosylcobyrinic A,C-diamide. NH(2) groups are provided by glutamine, and one molecule of ATP is hydrogenolyzed for each amidation. The sequence is that of Cobyric acid synthase from Saccharophagus degradans (strain 2-40 / ATCC 43961 / DSM 17024).